Reading from the N-terminus, the 397-residue chain is DNA-directed RNA polymerase subunit Rpo1C (397 aa).

This sequence belongs to the RNA polymerase beta' chain family. As to quaternary structure, part of the RNA polymerase complex.

Its subcellular location is the cytoplasm. The enzyme catalyses RNA(n) + a ribonucleoside 5'-triphosphate = RNA(n+1) + diphosphate. Functionally, DNA-dependent RNA polymerase (RNAP) catalyzes the transcription of DNA into RNA using the four ribonucleoside triphosphates as substrates. Forms part of the jaw domain. In Pyrococcus horikoshii (strain ATCC 700860 / DSM 12428 / JCM 9974 / NBRC 100139 / OT-3), this protein is DNA-directed RNA polymerase subunit Rpo1C.